Reading from the N-terminus, the 868-residue chain is Probable mixed-linked glucan synthase 3 (868 aa).

The interval 36–68 (ERKAAGGGGGGAKGKHWAAADKGERRAAKECGG) is disordered. Positions 53-68 (AAADKGERRAAKECGG) are enriched in basic and acidic residues. 2 consecutive transmembrane segments (helical) span residues 86–106 (LLHPYRALIFARLIAVLLFFG) and 116–136 (IMWFWTMSVAGDVWFGFSWLL). The active site involves aspartate 211. 2 residues coordinate substrate: aspartate 412 and aspartate 414. Aspartate 573 is an active-site residue. Helical transmembrane passes span 649–669 (IYPVTSLFILLYAISPVMWLI), 686–706 (LLVIILMIHMIGWLEIKWAGI), 717–737 (FFMIGSTSAYPTAVLHMVVNL), 771–791 (MLIPTMVVLVANIGAIGVAIG), 810–830 (MGLLFNMWVMFLLYPFALAIM), and 838–858 (IILVVLLPIIFVIVALVYVAT).

The protein belongs to the glycosyltransferase 2 family. Plant cellulose synthase-like F subfamily.

It localises to the golgi apparatus membrane. Functionally, may catalyze both beta-1,3 and beta-1,4 glycosidic linkage on beta-D-glucan. Essential for (1,3;1,4)-beta-D-glucans synthesis in grasses and cereals (Poaceae). The mixed-linked glucans (which are not present in walls of dicotyledons or most other monocotyledonous plants) are particularly important constituents of the walls of the starchy endosperm and aleurone cells of cereal grains such as oats, wheat, rice and barley. They can account for up to 70% by weight of the wall. The chain is Probable mixed-linked glucan synthase 3 (CSLF3) from Oryza sativa subsp. japonica (Rice).